The chain runs to 415 residues: UDP-galactose transporter homolog 1 (415 aa).

Residues Met-1–Pro-39 are disordered. Residues Glu-9–Gly-33 show a composition bias toward polar residues. N-linked (GlcNAc...) asparagine glycans are attached at residues Asn-16 and Asn-26. The next 5 membrane-spanning stretches (helical) occupy residues Leu-45–Leu-65, Ile-95–Phe-115, Ile-132–Ala-152, Thr-161–Phe-181, and Tyr-185–Leu-205. Residue Asn-221 is glycosylated (N-linked (GlcNAc...) asparagine). A helical membrane pass occupies residues Ser-223–Thr-243. Asn-244 is a glycosylation site (N-linked (GlcNAc...) asparagine). The next 3 membrane-spanning stretches (helical) occupy residues Leu-281–Ile-301, Asn-325–Ser-345, and Val-368–Gly-388.

Belongs to the nucleotide-sugar transporter family. SLC35B subfamily.

The protein resides in the endoplasmic reticulum membrane. May be involved in specific transport of UDP-Gal from the cytosol to the Golgi lumen. Involved in the maintenance of optimal conditions for the folding of secretory pathway proteins in the endoplasmic reticulum. This chain is UDP-galactose transporter homolog 1 (hut1), found in Aspergillus fumigatus (strain ATCC MYA-4609 / CBS 101355 / FGSC A1100 / Af293) (Neosartorya fumigata).